A 205-amino-acid chain; its full sequence is Coenzyme Q-binding protein COQ10, mitochondrial (205 aa).

The protein belongs to the COQ10 family. In terms of assembly, interacts with coenzyme Q.

It is found in the mitochondrion inner membrane. Functionally, required for the function of coenzyme Q in the respiratory chain. May serve as a chaperone or may be involved in the transport of Q6 from its site of synthesis to the catalytic sites of the respiratory complexes. The sequence is that of Coenzyme Q-binding protein COQ10, mitochondrial (coq10-1) from Dictyostelium discoideum (Social amoeba).